The following is a 938-amino-acid chain: Protocadherin gamma-C4 (938 aa).

The N-terminal stretch at 1 to 29 (MLRKVRSWTEIWRWATLLFLFYHLGYVCG) is a signal peptide. Cadherin domains are found at residues 30–133 (QIRY…APRF), 134–242 (PRQQ…APAF), 243–350 (QQSS…APYI), 351–455 (TVTS…PPSF), 456–565 (FQRS…APAV), and 572–676 (PGSL…VPDL). Over 30–692 (QIRYPVPEES…REGESRLTLY (663 aa)) the chain is Extracellular. N-linked (GlcNAc...) asparagine glycosylation is found at N265, N276, and N444. Residues 693–713 (LAVSLVAICFVSFGSFVALLS) traverse the membrane as a helical segment. The Cytoplasmic segment spans residues 714 to 938 (KCLRGAACGV…KKKSGKKEKK (225 aa)). Disordered stretches follow at residues 791–847 (PSAP…WPNN) and 908–938 (ATLTNAAGKRDGKAPAGGNGNKKKSGKKEKK). Polar residues predominate over residues 822–847 (WRFSQAQRPGTSGSQNGDDTGTWPNN). Residues 928–938 (NKKKSGKKEKK) are compositionally biased toward basic residues.

The protein resides in the cell membrane. In terms of biological role, potential calcium-dependent cell-adhesion protein. May be involved in the establishment and maintenance of specific neuronal connections in the brain. The chain is Protocadherin gamma-C4 (PCDHGC4) from Homo sapiens (Human).